Here is a 62-residue protein sequence, read N- to C-terminus: Large ribosomal subunit protein bL28 (62 aa).

This sequence belongs to the bacterial ribosomal protein bL28 family.

In Onion yellows phytoplasma (strain OY-M), this protein is Large ribosomal subunit protein bL28.